Consider the following 214-residue polypeptide: Ras-related protein Rab2BV (214 aa).

A GTP-binding site is contributed by 19–26 (GDSGVGKS). The Effector region signature appears at 41-49 (SKSTIGVEF). GTP-binding positions include 67–71 (DTAGQ) and 125–128 (NKSD). Residues cysteine 211 and cysteine 212 are each lipidated (S-geranylgeranyl cysteine).

This sequence belongs to the small GTPase superfamily. Rab family.

The protein localises to the cell membrane. In Beta vulgaris (Sugar beet), this protein is Ras-related protein Rab2BV (RAB2BV).